Consider the following 561-residue polypeptide: Transmembrane protein 209 (561 aa).

Serine 11 is modified (phosphoserine). Residues valine 28–threonine 48 traverse the membrane as a helical segment. Asparagine 57 is a glycosylation site (N-linked (GlcNAc...) asparagine). Residues tyrosine 60–phenylalanine 80 form a helical membrane-spanning segment. A Phosphoserine modification is found at serine 98. 2 disordered regions span residues leucine 120–threonine 156 and serine 200–lysine 232. Positions serine 138–proline 152 are enriched in low complexity. Phosphoserine is present on residues serine 201 and serine 248. Residues glutamate 250 to proline 270 are disordered. A compositionally biased stretch (low complexity) spans serine 260 to proline 270. The N-linked (GlcNAc...) asparagine glycan is linked to asparagine 274. Serine 278 carries the post-translational modification Phosphoserine.

Interacts with NUP205.

The protein resides in the membrane. It localises to the nucleus envelope. It is found in the golgi apparatus. The protein localises to the cytoplasm. In terms of biological role, nuclear envelope protein which in association with NUP205, may be involved in nuclear transport of various nuclear proteins in addition to MYC. This Mus musculus (Mouse) protein is Transmembrane protein 209 (Tmem209).